A 112-amino-acid chain; its full sequence is FK506-binding protein 1 (112 aa).

Positions 1–10 (MSAPATTQVE) are enriched in polar residues. The interval 1-20 (MSAPATTQVEILQEGDGKTF) is disordered. Positions 24–112 (GDLVTIHYTG…LFDVELLNVN (89 aa)) constitute a PPIase FKBP-type domain.

Belongs to the FKBP-type PPIase family. FKBP1 subfamily.

The protein resides in the cytoplasm. It carries out the reaction [protein]-peptidylproline (omega=180) = [protein]-peptidylproline (omega=0). With respect to regulation, inhibited by both FK506 and rapamycin. PPIases accelerate the folding of proteins. It catalyzes the cis-trans isomerization of proline imidic peptide bonds in oligopeptides. The chain is FK506-binding protein 1 (FPR1) from Debaryomyces hansenii (strain ATCC 36239 / CBS 767 / BCRC 21394 / JCM 1990 / NBRC 0083 / IGC 2968) (Yeast).